The following is a 901-amino-acid chain: Sperm-associated antigen 1 (901 aa).

TPR repeat units follow at residues 213–246 (ANRE…LPTA), 247–279 (IAYN…DPGN), and 280–313 (VKAL…EPDN). A disordered region spans residues 322-437 (EVERDLKNSE…DNPSGLKRRG (116 aa)). 2 positions are modified to phosphoserine: serine 351 and serine 359. 5 TPR repeats span residues 430–464 (PSGL…EPTG), 472–505 (SILY…HPFS), 507–539 (KPLL…DCGI), 606–639 (FQAL…NSKA), and 640–673 (CAIY…DGEN). The disordered stretch occupies residues 694-776 (GVDPSQVLLS…AEPAEKLDVS (83 aa)). Residue serine 703 is modified to Phosphoserine. Residues 708-717 (EAARHLDTKN) are compositionally biased toward basic and acidic residues. A phosphoserine mark is found at serine 739 and serine 740. Residue 756–763 (PARDGVED) participates in GTP binding. Serine 766 carries the phosphoserine modification.

As to expression, detected in cerebellum, tongue, esophagus, forestomach, sperm and testis.

The protein localises to the cytoplasm. It localises to the dynein axonemal particle. May play a role in the cytoplasmic assembly of the ciliary dynein arms. May play a role in fertilization. Binds GTP and has GTPase activity. This is Sperm-associated antigen 1 (Spag1) from Mus musculus (Mouse).